The sequence spans 120 residues: Membrane-anchored ubiquitin-fold protein 5 (120 aa).

One can recognise a Ubiquitin-like domain in the interval Ile7–Glu72. Cys115 carries S-palmitoyl cysteine lipidation. Cys117 carries the cysteine methyl ester modification. Cys117 carries S-geranylgeranyl cysteine lipidation. The propeptide at Cys118–Leu120 is removed in mature form.

Ubiquitous.

It is found in the cell membrane. Its function is as follows. May serve as docking site to facilitate the association of other proteins to the plasma membrane. The chain is Membrane-anchored ubiquitin-fold protein 5 (MUB5) from Arabidopsis thaliana (Mouse-ear cress).